A 182-amino-acid chain; its full sequence is D-lyxose ketol-isomerase (182 aa).

Residues H74, H76, E87, and H142 each contribute to the Mn(2+) site.

This sequence belongs to the D-lyxose ketol-isomerase family. In terms of assembly, homodimer. It depends on Mn(2+) as a cofactor.

It catalyses the reaction D-lyxose = D-xylulose. In terms of biological role, sugar isomerase that catalyzes the reversible isomerization of D-lyxose to D-xylulose. Shows weak activity with D-mannose and L-ribose. The polypeptide is D-lyxose ketol-isomerase (Cohnella laeviribosi).